Here is a 569-residue protein sequence, read N- to C-terminus: Glucose-6-phosphate isomerase, cytosolic 2A (569 aa).

Residue Glu-360 is the Proton donor of the active site. Residues His-391 and Lys-516 contribute to the active site.

Belongs to the GPI family. In terms of assembly, homodimer.

It localises to the cytoplasm. It carries out the reaction alpha-D-glucose 6-phosphate = beta-D-fructose 6-phosphate. Its pathway is carbohydrate degradation; glycolysis; D-glyceraldehyde 3-phosphate and glycerone phosphate from D-glucose: step 2/4. The chain is Glucose-6-phosphate isomerase, cytosolic 2A (PGIC2-A) from Clarkia lewisii (Farewell-to-spring).